Consider the following 430-residue polypeptide: Enolase (430 aa).

Q164 lines the (2R)-2-phosphoglycerate pocket. Catalysis depends on E208, which acts as the Proton donor. Mg(2+)-binding residues include D245, E288, and D315. K340, R369, S370, and K391 together coordinate (2R)-2-phosphoglycerate. K340 acts as the Proton acceptor in catalysis.

It belongs to the enolase family. Mg(2+) serves as cofactor.

The protein localises to the cytoplasm. The protein resides in the secreted. It is found in the cell surface. The enzyme catalyses (2R)-2-phosphoglycerate = phosphoenolpyruvate + H2O. Its pathway is carbohydrate degradation; glycolysis; pyruvate from D-glyceraldehyde 3-phosphate: step 4/5. Catalyzes the reversible conversion of 2-phosphoglycerate (2-PG) into phosphoenolpyruvate (PEP). It is essential for the degradation of carbohydrates via glycolysis. The polypeptide is Enolase (Thermococcus kodakarensis (strain ATCC BAA-918 / JCM 12380 / KOD1) (Pyrococcus kodakaraensis (strain KOD1))).